Consider the following 640-residue polypeptide: Probable potassium transport system protein Kup 2 (640 aa).

Residues 1–20 form a disordered region; it reads MTADIAATPAETPATNGHGD. The next 12 membrane-spanning stretches (helical) occupy residues 30-50, 71-91, 117-137, 155-175, 183-203, 224-244, 265-285, 294-314, 363-383, 385-405, 410-430, and 437-457; these read LTLGSIGVVYGDIGTSPLYAL, VVSLILWALIVVVTLKYVVIL, ASIIVLLGIISGALFYGDAVI, AAFDPYVVPLTIIILVMLFAV, VAAFFGPIMLIWFLVIGIAAF, FMLHHGIIGFITLGAVFLAVT, WLFVVLPSLALNYLGQGALVI, PFFLMFPDWALIPMVALATVA, LLLVSVVLLVLLFKSSSALAS, YGISVTGTMVVTAMMGFVVIW, WSPIAAGALIAPFLFLDLTFL, and VLEGGWVPLALGGFVMTLMYT.

Belongs to the HAK/KUP transporter (TC 2.A.72) family.

Its subcellular location is the cell inner membrane. The enzyme catalyses K(+)(in) + H(+)(in) = K(+)(out) + H(+)(out). Its function is as follows. Transport of potassium into the cell. Likely operates as a K(+):H(+) symporter. The protein is Probable potassium transport system protein Kup 2 of Bradyrhizobium sp. (strain ORS 278).